The primary structure comprises 288 residues: 4-hydroxy-3-methylbut-2-enyl diphosphate reductase (288 aa).

Residue Cys-12 coordinates [4Fe-4S] cluster. Residues His-42 and His-77 each coordinate (2E)-4-hydroxy-3-methylbut-2-enyl diphosphate. The dimethylallyl diphosphate site is built by His-42 and His-77. Residues His-42 and His-77 each coordinate isopentenyl diphosphate. Cys-99 provides a ligand contact to [4Fe-4S] cluster. Residue His-127 participates in (2E)-4-hydroxy-3-methylbut-2-enyl diphosphate binding. A dimethylallyl diphosphate-binding site is contributed by His-127. His-127 contacts isopentenyl diphosphate. The Proton donor role is filled by Glu-129. Thr-165 is a (2E)-4-hydroxy-3-methylbut-2-enyl diphosphate binding site. Residue Cys-193 participates in [4Fe-4S] cluster binding. 4 residues coordinate (2E)-4-hydroxy-3-methylbut-2-enyl diphosphate: Ser-221, Ser-222, Asn-223, and Ser-265. The dimethylallyl diphosphate site is built by Ser-221, Ser-222, Asn-223, and Ser-265. Ser-221, Ser-222, Asn-223, and Ser-265 together coordinate isopentenyl diphosphate.

Belongs to the IspH family. The cofactor is [4Fe-4S] cluster.

It catalyses the reaction isopentenyl diphosphate + 2 oxidized [2Fe-2S]-[ferredoxin] + H2O = (2E)-4-hydroxy-3-methylbut-2-enyl diphosphate + 2 reduced [2Fe-2S]-[ferredoxin] + 2 H(+). It carries out the reaction dimethylallyl diphosphate + 2 oxidized [2Fe-2S]-[ferredoxin] + H2O = (2E)-4-hydroxy-3-methylbut-2-enyl diphosphate + 2 reduced [2Fe-2S]-[ferredoxin] + 2 H(+). The protein operates within isoprenoid biosynthesis; dimethylallyl diphosphate biosynthesis; dimethylallyl diphosphate from (2E)-4-hydroxy-3-methylbutenyl diphosphate: step 1/1. It participates in isoprenoid biosynthesis; isopentenyl diphosphate biosynthesis via DXP pathway; isopentenyl diphosphate from 1-deoxy-D-xylulose 5-phosphate: step 6/6. In terms of biological role, catalyzes the conversion of 1-hydroxy-2-methyl-2-(E)-butenyl 4-diphosphate (HMBPP) into a mixture of isopentenyl diphosphate (IPP) and dimethylallyl diphosphate (DMAPP). Acts in the terminal step of the DOXP/MEP pathway for isoprenoid precursor biosynthesis. The chain is 4-hydroxy-3-methylbut-2-enyl diphosphate reductase from Caldanaerobacter subterraneus subsp. tengcongensis (strain DSM 15242 / JCM 11007 / NBRC 100824 / MB4) (Thermoanaerobacter tengcongensis).